The sequence spans 171 residues: Lipoprotein signal peptidase (171 aa).

Helical transmembrane passes span 8–28, 64–84, and 99–119; these read SFLW…YIVV, WQQY…VYFL, and ALII…GFVV. Active-site residues include Asp120 and Asp138. A helical transmembrane segment spans residues 133–153; the sequence is VFNIADIAICIGAGLLVLDAF.

Belongs to the peptidase A8 family.

Its subcellular location is the cell inner membrane. The enzyme catalyses Release of signal peptides from bacterial membrane prolipoproteins. Hydrolyzes -Xaa-Yaa-Zaa-|-(S,diacylglyceryl)Cys-, in which Xaa is hydrophobic (preferably Leu), and Yaa (Ala or Ser) and Zaa (Gly or Ala) have small, neutral side chains.. It functions in the pathway protein modification; lipoprotein biosynthesis (signal peptide cleavage). Functionally, this protein specifically catalyzes the removal of signal peptides from prolipoproteins. The chain is Lipoprotein signal peptidase from Haemophilus influenzae (strain ATCC 51907 / DSM 11121 / KW20 / Rd).